The following is a 73-amino-acid chain: Small ribosomal subunit protein bS18 (73 aa).

Belongs to the bacterial ribosomal protein bS18 family. Part of the 30S ribosomal subunit. Forms a tight heterodimer with protein bS6.

Binds as a heterodimer with protein bS6 to the central domain of the 16S rRNA, where it helps stabilize the platform of the 30S subunit. This chain is Small ribosomal subunit protein bS18, found in Coxiella burnetii (strain Dugway 5J108-111).